Consider the following 872-residue polypeptide: Coatomer subunit gamma-2 (872 aa).

HEAT repeat units follow at residues 64–101, 283–320, 321–355, 356–392, 395–430, and 467–504; these read MEAT…ISED, RELA…KHPS, AVTA…GSES, SVDR…KYPR, SVMM…ENPD, and PTPS…QNEP.

The protein belongs to the COPG family. In terms of assembly, oligomeric complex.

The protein resides in the cytoplasm. It is found in the golgi apparatus membrane. The protein localises to the cytoplasmic vesicle. It localises to the COPI-coated vesicle membrane. Its function is as follows. The coatomer is a cytosolic protein complex that binds to dilysine motifs and reversibly associates with Golgi non-clathrin-coated vesicles, which further mediate biosynthetic protein transport from the ER, via the Golgi up to the trans Golgi network. Coatomer complex is required for budding from Golgi membranes, and is essential for the retrograde Golgi-to-ER transport of dilysine-tagged proteins. This Xenopus tropicalis (Western clawed frog) protein is Coatomer subunit gamma-2 (copg2).